A 113-amino-acid polypeptide reads, in one-letter code: Photosystem II reaction center Psb28 protein (113 aa).

This sequence belongs to the Psb28 family. In terms of assembly, part of the photosystem II complex.

Its subcellular location is the cellular thylakoid membrane. The protein is Photosystem II reaction center Psb28 protein of Nostoc punctiforme (strain ATCC 29133 / PCC 73102).